The following is a 550-amino-acid chain: Calcyphosin-2 (550 aa).

Disordered stretches follow at residues 1–20 and 175–198; these read MVPP…DNFS and ISDP…DSER. Polar residues predominate over residues 181–190; the sequence is DLNTKNQESS. 3 EF-hand domains span residues 379–414, 415–452, and 453–488; these read RILT…FHLE, VSEQ…EMNE, and YRKS…KKHP. Residues Asp-466, Asn-468, Thr-470, and Asp-477 each coordinate Ca(2+).

This is Calcyphosin-2 (Caps2) from Mus musculus (Mouse).